The following is a 341-amino-acid chain: Protein RecA, plasmid (341 aa).

Position 80-87 (80-87 (GAESSGKT)) interacts with ATP.

The protein belongs to the RecA family.

It is found in the cytoplasm. Functionally, can catalyze the hydrolysis of ATP in the presence of single-stranded DNA, the ATP-dependent uptake of single-stranded DNA by duplex DNA, and the ATP-dependent hybridization of homologous single-stranded DNAs. It interacts with LexA causing its activation and leading to its autocatalytic cleavage. The protein is Protein RecA, plasmid of Lactococcus lactis subsp. lactis (Streptococcus lactis).